Consider the following 121-residue polypeptide: uncharacterized protein (121 aa).

This is an uncharacterized protein from Aquifex aeolicus (strain VF5).